A 416-amino-acid chain; its full sequence is Proline-serine-threonine phosphatase-interacting protein 1 (416 aa).

The region spanning 5 to 264 (LQFKDAFWCR…TLEGCSIDAD (260 aa)) is the F-BAR domain. Residues 166–212 (HQKQVEKSQNKARQCKDSATEAERVYRQSIAQLEKVRAEWEQEHRTT) are a coiled coil. S318 is modified (phosphoserine). Residue Y345 is modified to Phosphotyrosine. The 58-residue stretch at 359–416 (SPAQEYRALYDYTAQNPDELDLSAGDILEVILEGEDGWWTVERNGQRGFVPGSYLEKL) folds into the SH3 domain.

In terms of assembly, homodimer. Homotrimer. Interacts (via coiled-coil domain) with CD2AP, PTPN12 and PTPN18. Interacts (via SH3 domain) with ABL1 and WAS. Interacts (via SH3 and coiled-coil domains) with MEFV (via B-box zinc finger); the interaction allows binding of MEFV to PYCARD and facilitates formation of PYCARD pyroptosomes. Interacts with CD2, DNM2 and FASLG. Dephosphorylated on Tyr-345 by PTPN18, this event negatively regulates the association of PSTPIP1 with SH2 domain-containing proteins as tyrosine kinase. Phosphorylation of Tyr-345 is probably required for subsequent phosphorylation at other tyrosine residues. Phosphorylation is induced by activation of the EGFR and PDGFR in a ABL1 dependent manner. The phosphorylation regulates the interaction with WAS and with MEFV. As to expression, highly expressed in the peripheral blood leukocytes, granulocytes and monocytes, namely in T-cells and natural killer cells, and in spleen. Weakly expressed in the thymus, small intestine, lung and placenta.

The protein localises to the cytoplasm. It is found in the cell membrane. Its subcellular location is the cell projection. The protein resides in the uropodium. It localises to the cytoskeleton. The protein localises to the perinuclear region. It is found in the lamellipodium. Its subcellular location is the cleavage furrow. Involved in regulation of the actin cytoskeleton. May regulate WAS actin-bundling activity. Bridges the interaction between ABL1 and PTPN18 leading to ABL1 dephosphorylation. May play a role as a scaffold protein between PTPN12 and WAS and allow PTPN12 to dephosphorylate WAS. Has the potential to physically couple CD2 and CD2AP to WAS. Acts downstream of CD2 and CD2AP to recruit WAS to the T-cell:APC contact site so as to promote the actin polymerization required for synapse induction during T-cell activation. Down-regulates CD2-stimulated adhesion through the coupling of PTPN12 to CD2. Also has a role in innate immunity and the inflammatory response. Recruited to inflammasomes by MEFV. Induces formation of pyroptosomes, large supramolecular structures composed of oligomerized PYCARD dimers which form prior to inflammatory apoptosis. Binding to MEFV allows MEFV to bind to PYCARD and facilitates pyroptosome formation. Regulates endocytosis and cell migration in neutrophils. The sequence is that of Proline-serine-threonine phosphatase-interacting protein 1 (PSTPIP1) from Homo sapiens (Human).